A 444-amino-acid chain; its full sequence is Cortexillin-1 (444 aa).

The segment at 1 to 227 (MAGKDWEIVQ…VLYTSLFFHA (227 aa)) is actin-binding. Calponin-homology (CH) domains are found at residues 8–115 (IVQE…RKYR) and 124–229 (KSSE…HAYR). Coiled-coil stretches lie at residues 227–352 (AYRA…TRIR) and 410–434 (LATK…DLKA).

Belongs to the cortexillin family. In terms of assembly, homodimer; parallel.

The protein resides in the cytoplasm. It localises to the cytoskeleton. In terms of biological role, actin-bundling protein. When linked to F-actin the actin filaments form preferentially anti-parallel bundles that associate into meshworks. Plays a major role in cytokinesis. Negatively regulates cortical localization of rapgap1. The polypeptide is Cortexillin-1 (ctxA) (Dictyostelium discoideum (Social amoeba)).